A 202-amino-acid polypeptide reads, in one-letter code: MSRYRGPRLRIVRRLGDLPGLTRKSARRAYPPGQHGQNRKKRSEYAIRLEEKQKLRLNYGLTEKQLLRYVRRARRVTGSTGQVLLQLLEMRLDNTVFRLGMAPTIPAARQLVNHGHVTVNGRVVNIASYQCRPGEEIAVRDKAPSRKLVENNLQYPGLANLPSHLEFDKNKLVGKVNGVIEREWVALQVNELLVVEYYSRQA.

Positions 22 to 43 (TRKSARRAYPPGQHGQNRKKRS) are disordered. The S4 RNA-binding domain maps to 90–152 (MRLDNTVFRL…APSRKLVENN (63 aa)).

Belongs to the universal ribosomal protein uS4 family. Part of the 30S ribosomal subunit. Contacts protein S5. The interaction surface between S4 and S5 is involved in control of translational fidelity.

Functionally, one of the primary rRNA binding proteins, it binds directly to 16S rRNA where it nucleates assembly of the body of the 30S subunit. Its function is as follows. With S5 and S12 plays an important role in translational accuracy. This chain is Small ribosomal subunit protein uS4, found in Trichormus variabilis (strain ATCC 29413 / PCC 7937) (Anabaena variabilis).